The chain runs to 1226 residues: Methionine synthase (1226 aa).

Residues 7 to 327 form the Hcy-binding domain; it reads KVQIEKQLSE…EHIRQMALVV (321 aa). Zn(2+) is bound by residues C249, C312, and C313. The 262-residue stretch at 358–619 folds into the Pterin-binding domain; it reads FINVGERTNV…VPEDLREAVE (262 aa). In terms of domain architecture, B12-binding N-terminal spans 652 to 746; it reads SALEWRDWPV…FINASKEVGA (95 aa). Residues E696, 758–762, H761, S806, T810, and A862 contribute to the methylcob(III)alamin site; that span reads GDVHD. Residues 748-883 enclose the B12-binding domain; it reads NGKILLATVK…SNELKPSFVE (136 aa). The 328-residue stretch at 899–1226 folds into the AdoMet activation domain; that stretch reads KQPRTKPVTL…AEKWLGPNLN (328 aa). S-adenosyl-L-methionine is bound by residues D949, R1137, and 1192–1193; that span reads YF.

This sequence belongs to the vitamin-B12 dependent methionine synthase family. It depends on methylcob(III)alamin as a cofactor. Zn(2+) serves as cofactor.

The catalysed reaction is (6S)-5-methyl-5,6,7,8-tetrahydrofolate + L-homocysteine = (6S)-5,6,7,8-tetrahydrofolate + L-methionine. Its pathway is amino-acid biosynthesis; L-methionine biosynthesis via de novo pathway; L-methionine from L-homocysteine (MetH route): step 1/1. Functionally, catalyzes the transfer of a methyl group from methyl-cobalamin to homocysteine, yielding enzyme-bound cob(I)alamin and methionine. Subsequently, remethylates the cofactor using methyltetrahydrofolate. This chain is Methionine synthase (metH), found in Aliivibrio fischeri (Vibrio fischeri).